The chain runs to 130 residues: MLDWRLASTHFILAMIVMLWGSGKAFSVDLASQEFGTASLQSPPTAREEKSATELSAKLLRLDDLVSLENDVFETKKKRSFSGFGSPLDRLSAGSVEHRGKQRKAVDHSKKRFGIPMDRIGRNRLSSSRG.

The signal sequence occupies residues 1–25; the sequence is MLDWRLASTHFILAMIVMLWGSGKA. Position 129 is an arginine amide (R129).

This sequence belongs to the Osteocrin family. Interacts with NPR3. As to expression, expressed in skeletal muscle and to a much lesser extent in bone, brown adipose tissue, spleen and testis. Not expressed in neurons.

It is found in the secreted. Its function is as follows. Hormone that acts as a ligand for natriuretic peptide receptor NPR3/NPR-C and promotes bone growth and physical endurance in muscle. Acts as a regulator of osteoblast differentiation and bone growth by binding to natriuretic peptide receptor NPR3/NPR-C, thereby preventing binding between NPR3/NPR-C and natriuretic peptides, leading to increase cGMP production. Required to enhance physical endurance: induced following physical exercise in muscle and promotes cGMP production, probably by interacting with NPR3/NPR-C. May act as an autocrine and paracrine factor linked to glucose metabolism in skeletal muscle. This Mus musculus (Mouse) protein is Osteocrin.